The sequence spans 348 residues: tRNA N6-adenosine threonylcarbamoyltransferase (348 aa).

The Fe cation site is built by H109 and H113. Substrate-binding positions include 136–140 (TVSGG), D169, G182, D186, and N284. A Fe cation-binding site is contributed by D312.

Belongs to the KAE1 / TsaD family. Fe(2+) is required as a cofactor.

The protein resides in the cytoplasm. The enzyme catalyses L-threonylcarbamoyladenylate + adenosine(37) in tRNA = N(6)-L-threonylcarbamoyladenosine(37) in tRNA + AMP + H(+). Its function is as follows. Required for the formation of a threonylcarbamoyl group on adenosine at position 37 (t(6)A37) in tRNAs that read codons beginning with adenine. Is involved in the transfer of the threonylcarbamoyl moiety of threonylcarbamoyl-AMP (TC-AMP) to the N6 group of A37, together with TsaE and TsaB. TsaD likely plays a direct catalytic role in this reaction. The chain is tRNA N6-adenosine threonylcarbamoyltransferase from Chlorobium luteolum (strain DSM 273 / BCRC 81028 / 2530) (Pelodictyon luteolum).